Consider the following 206-residue polypeptide: Thiamine-phosphate synthase (206 aa).

4-amino-2-methyl-5-(diphosphooxymethyl)pyrimidine-binding positions include 38–42 (QLRAK) and Asn-70. Asp-71 and Asp-90 together coordinate Mg(2+). Ser-107 contributes to the 4-amino-2-methyl-5-(diphosphooxymethyl)pyrimidine binding site. Residue 133–135 (TTT) participates in 2-[(2R,5Z)-2-carboxy-4-methylthiazol-5(2H)-ylidene]ethyl phosphate binding. Residue Lys-136 coordinates 4-amino-2-methyl-5-(diphosphooxymethyl)pyrimidine. Residues Gly-164 and 184–185 (VS) contribute to the 2-[(2R,5Z)-2-carboxy-4-methylthiazol-5(2H)-ylidene]ethyl phosphate site.

The protein belongs to the thiamine-phosphate synthase family. Requires Mg(2+) as cofactor.

The catalysed reaction is 2-[(2R,5Z)-2-carboxy-4-methylthiazol-5(2H)-ylidene]ethyl phosphate + 4-amino-2-methyl-5-(diphosphooxymethyl)pyrimidine + 2 H(+) = thiamine phosphate + CO2 + diphosphate. It carries out the reaction 2-(2-carboxy-4-methylthiazol-5-yl)ethyl phosphate + 4-amino-2-methyl-5-(diphosphooxymethyl)pyrimidine + 2 H(+) = thiamine phosphate + CO2 + diphosphate. The enzyme catalyses 4-methyl-5-(2-phosphooxyethyl)-thiazole + 4-amino-2-methyl-5-(diphosphooxymethyl)pyrimidine + H(+) = thiamine phosphate + diphosphate. Its pathway is cofactor biosynthesis; thiamine diphosphate biosynthesis; thiamine phosphate from 4-amino-2-methyl-5-diphosphomethylpyrimidine and 4-methyl-5-(2-phosphoethyl)-thiazole: step 1/1. Its function is as follows. Condenses 4-methyl-5-(beta-hydroxyethyl)thiazole monophosphate (THZ-P) and 2-methyl-4-amino-5-hydroxymethyl pyrimidine pyrophosphate (HMP-PP) to form thiamine monophosphate (TMP). In Herpetosiphon aurantiacus (strain ATCC 23779 / DSM 785 / 114-95), this protein is Thiamine-phosphate synthase.